Here is a 494-residue protein sequence, read N- to C-terminus: Splicing regulatory glutamine/lysine-rich protein 1 (494 aa).

The 77-residue stretch at 69 to 145 (RTVYVGNLNS…RPLKINHSNN (77 aa)) folds into the RRM domain. Ser-174 and Ser-187 each carry phosphoserine. Positions 176-494 (ISAAIEPESG…ESPCSKADAV (319 aa)) are disordered. Basic and acidic residues predominate over residues 183-192 (ESGKSNERKG). Over residues 193–262 (GRSRSHTRSK…KSRSRSRSRD (70 aa)) the composition is skewed to basic residues. The span at 263 to 340 (KRKDTREKVK…DRSKETDEKR (78 aa)) shows a compositional bias: basic and acidic residues. Thr-348 carries the post-translational modification Phosphothreonine. The span at 357–373 (RRSRSTSRERRRRRSRS) shows a compositional bias: basic residues. Residues 404 to 474 (REKERDHISD…SPRTEDEGKV (71 aa)) show a composition bias toward basic and acidic residues. Positions 476–486 (HNGNCQPNEES) are enriched in polar residues. Lys-490 participates in a covalent cross-link: Glycyl lysine isopeptide (Lys-Gly) (interchain with G-Cter in SUMO2).

The protein belongs to the splicing factor SR family. In terms of assembly, homodimer. Binds SFRS1, SFRS2, SFRS3 and SFRS6. Interacts with the spliceosome. Interacts with SREK1IP1.

It is found in the nucleus. Functionally, participates in the regulation of alternative splicing by modulating the activity of other splice facors. Inhibits the splicing activity of SFRS1, SFRS2 and SFRS6. Augments the splicing activity of SFRS3. This Mus musculus (Mouse) protein is Splicing regulatory glutamine/lysine-rich protein 1 (Srek1).